Reading from the N-terminus, the 335-residue chain is Probable cytosolic iron-sulfur protein assembly protein Ciao1 (335 aa).

WD repeat units lie at residues 12–51 (GHKGRIWGVAWHPKGNVFASCGEDKAIRIWSLTGNTWSTK), 57–96 (GHKRTIREIQWSPCGQYLASASFDATTAIWSKSSGEFECN), 101–140 (GHENEVKSVSWSRSGGLLATCSRDKSVWIWEVAGDDEFEC), 146–185 (SHTQDVKRVVWHPTKEILASASYDNTIKMYAEEPIDNDWD), 192–231 (SHTSTIWGIDFDADGERLVSCSDDTTVKIWRAYHPGNSAG), 250–289 (QHSRAIYDVSWCKLTGLIATACGDDGIRIFKETSDSKPDE), and 301–335 (AHDQDVNSVQWNPVVAGQLISCSDDGTIKIWKVTE).

The protein belongs to the WD repeat CIA1 family.

Functionally, essential component of the cytosolic iron-sulfur (Fe/S) protein assembly machinery. Required for the maturation of extramitochondrial Fe/S proteins. The protein is Probable cytosolic iron-sulfur protein assembly protein Ciao1 of Drosophila yakuba (Fruit fly).